We begin with the raw amino-acid sequence, 393 residues long: NAD(P)H-quinone oxidoreductase subunit H, chloroplastic (393 aa).

Belongs to the complex I 49 kDa subunit family. NDH is composed of at least 16 different subunits, 5 of which are encoded in the nucleus.

The protein resides in the plastid. The protein localises to the chloroplast thylakoid membrane. It catalyses the reaction a plastoquinone + NADH + (n+1) H(+)(in) = a plastoquinol + NAD(+) + n H(+)(out). It carries out the reaction a plastoquinone + NADPH + (n+1) H(+)(in) = a plastoquinol + NADP(+) + n H(+)(out). NDH shuttles electrons from NAD(P)H:plastoquinone, via FMN and iron-sulfur (Fe-S) centers, to quinones in the photosynthetic chain and possibly in a chloroplast respiratory chain. The immediate electron acceptor for the enzyme in this species is believed to be plastoquinone. Couples the redox reaction to proton translocation, and thus conserves the redox energy in a proton gradient. The chain is NAD(P)H-quinone oxidoreductase subunit H, chloroplastic from Gossypium barbadense (Sea Island cotton).